The sequence spans 545 residues: Chaperonin GroEL 1 (545 aa).

ATP-binding positions include 30–33, lysine 51, 87–91, glycine 415, and aspartate 495; these read TLGP and DGTTT.

The protein belongs to the chaperonin (HSP60) family. In terms of assembly, forms a cylinder of 14 subunits composed of two heptameric rings stacked back-to-back. Interacts with the co-chaperonin GroES.

Its subcellular location is the cytoplasm. The catalysed reaction is ATP + H2O + a folded polypeptide = ADP + phosphate + an unfolded polypeptide.. In terms of biological role, together with its co-chaperonin GroES, plays an essential role in assisting protein folding. The GroEL-GroES system forms a nano-cage that allows encapsulation of the non-native substrate proteins and provides a physical environment optimized to promote and accelerate protein folding. This Rhizobium etli (strain ATCC 51251 / DSM 11541 / JCM 21823 / NBRC 15573 / CFN 42) protein is Chaperonin GroEL 1.